Here is a 125-residue protein sequence, read N- to C-terminus: MSWQTYVDEQLVGTGQLDGAIIIGLDGNSWASKNLTLKAGEGQAIAALFKTPANVFASGITINGIKYMGIKGDSRSIYGKKGATGVATVITGQCILIGYYNEKQQPGNAALVVEKLADYLIENGY.

An N-acetylserine modification is found at S2.

It belongs to the profilin family. As to quaternary structure, occurs in many kinds of cells as a complex with monomeric actin in a 1:1 ratio.

The protein resides in the cytoplasm. It is found in the cytoskeleton. Functionally, binds to actin and affects the structure of the cytoskeleton. At high concentrations, profilin prevents the polymerization of actin, whereas it enhances it at low concentrations. By binding to PIP2, it inhibits the formation of IP3 and DG. This is Profilin-P (PROP) from Physarum polycephalum (Slime mold).